Consider the following 90-residue polypeptide: Small ribosomal subunit protein bS18 (90 aa).

The protein belongs to the bacterial ribosomal protein bS18 family. As to quaternary structure, part of the 30S ribosomal subunit. Forms a tight heterodimer with protein bS6.

In terms of biological role, binds as a heterodimer with protein bS6 to the central domain of the 16S rRNA, where it helps stabilize the platform of the 30S subunit. This is Small ribosomal subunit protein bS18 from Bacteroides thetaiotaomicron (strain ATCC 29148 / DSM 2079 / JCM 5827 / CCUG 10774 / NCTC 10582 / VPI-5482 / E50).